The following is a 130-amino-acid chain: Sulfurtransferase TusD (130 aa).

Catalysis depends on cysteine 80, which acts as the Cysteine persulfide intermediate.

It belongs to the DsrE/TusD family. As to quaternary structure, heterohexamer, formed by a dimer of trimers. The hexameric TusBCD complex contains 2 copies each of TusB, TusC and TusD. The TusBCD complex interacts with TusE.

Its subcellular location is the cytoplasm. Part of a sulfur-relay system required for 2-thiolation of 5-methylaminomethyl-2-thiouridine (mnm(5)s(2)U) at tRNA wobble positions. Accepts sulfur from TusA and transfers it in turn to TusE. The chain is Sulfurtransferase TusD from Sodalis glossinidius (strain morsitans).